Here is a 439-residue protein sequence, read N- to C-terminus: C4-dicarboxylate transport protein (439 aa).

9 helical membrane-spanning segments follow: residues 10–30, 45–65, 77–97, 145–165, 185–205, 223–243, 290–310, 332–352, and 353–373; these read LYVQ…FYPP, LIKM…IAGM, LALL…LVLV, AFAK…GFAL, VLFA…FGAM, LMGT…GTIT, VVGL…AIYL, TLLA…GSGF, and IVLA…LALI. The tract at residues 415-439 is disordered; sequence LNGQTAEEASAPQALPDRMESRIHH.

Belongs to the dicarboxylate/amino acid:cation symporter (DAACS) (TC 2.A.23) family.

The protein localises to the cell inner membrane. Functionally, responsible for the transport of dicarboxylates such as succinate, fumarate, and malate from the periplasm across the membrane. The polypeptide is C4-dicarboxylate transport protein (Verminephrobacter eiseniae (strain EF01-2)).